Reading from the N-terminus, the 491-residue chain is Phosphoethanolamine N-methyltransferase 1 (491 aa).

Position 2 is an N-acetylalanine (Ala-2). Residues Gly-61, Arg-66, Asp-82, Asp-107, Val-108, and Asn-126 each coordinate S-adenosyl-L-homocysteine. Residues Ser-159, Ser-164, Gly-165, Arg-169, and Tyr-176 each contribute to the phosphocholine site. Residues 245–246 (QY) and Tyr-254 each bind N-methylethanolamine phosphate. Position 254 (Tyr-254) interacts with phosphocholine. Residues Val-263, Ser-264, Gly-290, Asp-312, Asp-338, Cys-339, and Arg-355 each contribute to the S-adenosyl-L-homocysteine site. Tyr-386, Tyr-400, Arg-404, Tyr-406, and Lys-472 together coordinate phosphocholine. Residues Tyr-386, Tyr-400, 404-406 (RGY), and Lys-472 each bind N-methylethanolamine phosphate.

It belongs to the class I-like SAM-binding methyltransferase superfamily. PEAMT family. Highly expressed in the meristem and elongation zones of the root. Expressed in differentiated root epidermal cells. Highly expressed in leaf vasculature.

The protein localises to the cytoplasm. The enzyme catalyses phosphoethanolamine + S-adenosyl-L-methionine = N-methylethanolamine phosphate + S-adenosyl-L-homocysteine + H(+). The catalysed reaction is N-methylethanolamine phosphate + S-adenosyl-L-methionine = N,N-dimethylethanolamine phosphate + S-adenosyl-L-homocysteine + H(+). It carries out the reaction N,N-dimethylethanolamine phosphate + S-adenosyl-L-methionine = phosphocholine + S-adenosyl-L-homocysteine + H(+). Its pathway is phospholipid metabolism; phosphatidylcholine biosynthesis; phosphocholine from phosphoethanolamine: step 1/1. Involved in phosphocholine biosynthesis. Catalyzes the N-methylation of phosphoethanolamine, phosphomonomethylethanolamine and phosphodimethylethanolamine, the three methylation steps required to convert phosphoethanolamine to phosphocholine (PC). Required for root system development and epidermal cell integrity through its role in choline and phospholipid metabolism. In association with NMT3, regulates PC homeostasis, phase transition at the shoot apex, coordinated organ development, and fertility. In association with NMT3, involved in phosphatidylcholine biosynthesis and vascular development. In association with NMT2, involved in the production of phosphatidylcholine in roots, essential for root development. In association with NMT2 produce phosphocholine mainly for leaf growth maintenance. Contributes to the regulation of overall root zonation dynamics through reactive oxygen species (ROS) and auxin-regulated cell differentiation. Participates in root development of primary root elongation under salt stress conditions by balancing reactive oxygen species (ROS) production and distribution through abscisic acid (ABA) signaling. This is Phosphoethanolamine N-methyltransferase 1 from Arabidopsis thaliana (Mouse-ear cress).